The following is a 110-amino-acid chain: Acylphosphatase (110 aa).

The 88-residue stretch at 21–108 (TRRYLVTGRV…TNLKSFRIEG (88 aa)) folds into the Acylphosphatase-like domain. Residues Arg36 and Asn54 contribute to the active site.

This sequence belongs to the acylphosphatase family.

The catalysed reaction is an acyl phosphate + H2O = a carboxylate + phosphate + H(+). This Koribacter versatilis (strain Ellin345) protein is Acylphosphatase (acyP).